A 244-amino-acid polypeptide reads, in one-letter code: 3-oxoacyl-[acyl-carrier-protein] reductase FabG (244 aa).

Residues 12 to 15 (GASR), Thr37, 59 to 60 (NV), and Asn86 contribute to the NADP(+) site. Residue Ser138 participates in substrate binding. The active-site Proton acceptor is Tyr151. NADP(+) contacts are provided by residues 151-155 (YAAAK) and Ile184.

The protein belongs to the short-chain dehydrogenases/reductases (SDR) family. As to quaternary structure, homotetramer.

It catalyses the reaction a (3R)-hydroxyacyl-[ACP] + NADP(+) = a 3-oxoacyl-[ACP] + NADPH + H(+). It functions in the pathway lipid metabolism; fatty acid biosynthesis. Functionally, catalyzes the NADPH-dependent reduction of beta-ketoacyl-ACP substrates to beta-hydroxyacyl-ACP products, the first reductive step in the elongation cycle of fatty acid biosynthesis. This Vibrio cholerae serotype O1 (strain ATCC 39315 / El Tor Inaba N16961) protein is 3-oxoacyl-[acyl-carrier-protein] reductase FabG (fabG).